Reading from the N-terminus, the 222-residue chain is Small ribosomal subunit protein uS3 (222 aa).

Residues 38 to 106 form the KH type-2 domain; that stretch reads IRKFISEKLA…NVHINIVEIK (69 aa).

The protein belongs to the universal ribosomal protein uS3 family. In terms of assembly, part of the 30S ribosomal subunit. Forms a tight complex with proteins S10 and S14.

Functionally, binds the lower part of the 30S subunit head. Binds mRNA in the 70S ribosome, positioning it for translation. In Lactobacillus johnsonii (strain CNCM I-12250 / La1 / NCC 533), this protein is Small ribosomal subunit protein uS3.